The following is a 228-amino-acid chain: Early nodulin-like protein 18 (228 aa).

The first 26 residues, Met-1–Ala-26, serve as a signal peptide directing secretion. A Phytocyanin domain is found at Lys-28–His-148. 4 N-linked (GlcNAc...) asparagine glycosylation sites follow: Asn-29, Asn-71, Asn-94, and Asn-145. Cysteines 86 and 136 form a disulfide. The interval His-148–Thr-211 is disordered. The span at Pro-153–Ser-170 shows a compositional bias: low complexity. Residues Asp-188–Ser-204 show a composition bias toward basic and acidic residues. Residue Ser-204 is the site of GPI-anchor amidated serine attachment. Positions Lys-205–Phe-228 are cleaved as a propeptide — removed in mature form.

It belongs to the early nodulin-like (ENODL) family. In terms of tissue distribution, mostly expressed in seedlings, roots and flowers, and, to a lower extent, in leaves, stems and seeds.

It is found in the cell membrane. In terms of biological role, may act as a carbohydrate transporter. This is Early nodulin-like protein 18 from Arabidopsis thaliana (Mouse-ear cress).